We begin with the raw amino-acid sequence, 364 residues long: 3-isopropylmalate dehydrogenase (364 aa).

NAD(+) is bound at residue 79-92; that stretch reads GPKWEHLPPDQQPE. Substrate contacts are provided by arginine 100, arginine 110, arginine 139, and aspartate 228. Aspartate 228, aspartate 252, and aspartate 256 together coordinate Mg(2+). Position 286–298 (286–298) interacts with NAD(+); that stretch reads GSAPDIAGKNIAN.

The protein belongs to the isocitrate and isopropylmalate dehydrogenases family. LeuB type 1 subfamily. Homodimer. Mg(2+) serves as cofactor. The cofactor is Mn(2+).

Its subcellular location is the cytoplasm. It catalyses the reaction (2R,3S)-3-isopropylmalate + NAD(+) = 4-methyl-2-oxopentanoate + CO2 + NADH. It participates in amino-acid biosynthesis; L-leucine biosynthesis; L-leucine from 3-methyl-2-oxobutanoate: step 3/4. Its function is as follows. Catalyzes the oxidation of 3-carboxy-2-hydroxy-4-methylpentanoate (3-isopropylmalate) to 3-carboxy-4-methyl-2-oxopentanoate. The product decarboxylates to 4-methyl-2 oxopentanoate. The protein is 3-isopropylmalate dehydrogenase of Escherichia coli (strain UTI89 / UPEC).